The sequence spans 330 residues: tRNA N6-adenosine threonylcarbamoyltransferase (330 aa).

Residues H110 and H114 each contribute to the Fe cation site. Substrate-binding positions include 133 to 137 (LVSGG), D166, G179, and N268. D296 contacts Fe cation.

The protein belongs to the KAE1 / TsaD family. Fe(2+) is required as a cofactor.

It is found in the cytoplasm. It carries out the reaction L-threonylcarbamoyladenylate + adenosine(37) in tRNA = N(6)-L-threonylcarbamoyladenosine(37) in tRNA + AMP + H(+). In terms of biological role, required for the formation of a threonylcarbamoyl group on adenosine at position 37 (t(6)A37) in tRNAs that read codons beginning with adenine. Is involved in the transfer of the threonylcarbamoyl moiety of threonylcarbamoyl-AMP (TC-AMP) to the N6 group of A37, together with TsaE and TsaB. TsaD likely plays a direct catalytic role in this reaction. The protein is tRNA N6-adenosine threonylcarbamoyltransferase of Kosmotoga olearia (strain ATCC BAA-1733 / DSM 21960 / TBF 19.5.1).